We begin with the raw amino-acid sequence, 268 residues long: MDQEQTPHSPTRHSRSPPSSASGSTSAEPVRSRWSPKPEQILILESIFHSGMVNPPKEETVRIRKMLEKFGAVGDANVFYWFQNRRSRSRRRQRQLQAAAAAADATTNTCDQTMMVSNSLPHHSGSDLGFGGCSTSSNYLFASSSSSYGGGCDNQSNSGMENLLTMSGQMSYHEATHHHYQNHSSNVTSILCPSDQNSNFQYQQGAITVFINGVPTEVTRGGIDMKATFGEDLVLVHSSGVPLPTDEFGFLMHSLQHGEAYFLVPRQT.

Positions 1–35 are disordered; that stretch reads MDQEQTPHSPTRHSRSPPSSASGSTSAEPVRSRWS. The span at 16–27 shows a compositional bias: low complexity; it reads SPPSSASGSTSA. Positions 29 to 93 form a DNA-binding region, homeobox; WUS-type; the sequence is PVRSRWSPKP…NRRSRSRRRQ (65 aa).

Belongs to the WUS homeobox family.

It localises to the nucleus. Functionally, transcription factor which may be involved in developmental processes. The sequence is that of WUSCHEL-related homeobox 11 (WOX11) from Arabidopsis thaliana (Mouse-ear cress).